A 177-amino-acid polypeptide reads, in one-letter code: Apoptosis regulatory protein Siva (177 aa).

Tyr34 bears the Phosphotyrosine; by ABL2 mark. Positions Arg36–Asp55 are interaction with BCL2L1 isoform Bcl-x(L) and inhibition of BCL2L1 anti-apoptotic activity.

As to quaternary structure, binds through its N-terminal region to the C-terminus of CD27 and to PXMP2/PMP22. Binds to the C-terminus of TNFRSF18/GITR. Binds to BCL2L1/BCLX isoform Bcl-x(L) but not to BAX. Zn(2+) serves as cofactor. As to expression, in post-ischemic kidney, found in cells lining the S3 segment of proximal tubules at 12 hours and 1 day post-ischemia. At five and seven days post-ischemia, found in epithelial cells of papillary proliferations in regenerating tubules.

The protein resides in the cytoplasm. It is found in the nucleus. Its function is as follows. Induces CD27-mediated apoptosis. Inhibits BCL2L1 isoform Bcl-x(L) anti-apoptotic activity. Inhibits activation of NF-kappa-B and promotes T-cell receptor-mediated apoptosis. The polypeptide is Apoptosis regulatory protein Siva (Siva1) (Rattus norvegicus (Rat)).